A 999-amino-acid polypeptide reads, in one-letter code: Bifunctional glutamine synthetase adenylyltransferase/adenylyl-removing enzyme (999 aa).

The interval 1 to 483 is adenylyl removase; that stretch reads MTPGRRSSTF…LHEKLFYRPL (483 aa). Residues 489 to 999 are adenylyl transferase; the sequence is QLAPGEARLS…RTVVEDLFYA (511 aa).

The protein belongs to the GlnE family. It depends on Mg(2+) as a cofactor.

The catalysed reaction is [glutamine synthetase]-O(4)-(5'-adenylyl)-L-tyrosine + phosphate = [glutamine synthetase]-L-tyrosine + ADP. The enzyme catalyses [glutamine synthetase]-L-tyrosine + ATP = [glutamine synthetase]-O(4)-(5'-adenylyl)-L-tyrosine + diphosphate. In terms of biological role, adenylation and deadenylation of glutamate--ammonia ligase. Functionally, involved in the regulation of glutamine synthetase GlnA, a key enzyme in the process to assimilate ammonia. When cellular nitrogen levels are high, the C-terminal adenylyl transferase (AT) inactivates GlnA by covalent transfer of an adenylyl group from ATP to specific tyrosine residue of GlnA, thus reducing its activity. Conversely, when nitrogen levels are low, the N-terminal adenylyl removase (AR) activates GlnA by removing the adenylyl group by phosphorolysis, increasing its activity. The regulatory region of GlnE binds the signal transduction protein PII (GlnB) which indicates the nitrogen status of the cell. This chain is Bifunctional glutamine synthetase adenylyltransferase/adenylyl-removing enzyme, found in Streptomyces coelicolor (strain ATCC BAA-471 / A3(2) / M145).